The chain runs to 2778 residues: Probable ubiquitin carboxyl-terminal hydrolase FAF (2778 aa).

Residues 1-85 form a disordered region; the sequence is MTFDTRRHTT…SQSSDDVAAS (85 aa). Over residues 10 to 39 the composition is skewed to low complexity; that stretch reads TGQPGSTAPSSSSSTTSTTTTTTSPAQSAG. A compositionally biased stretch (polar residues) spans 71 to 85; sequence QPATDSQSSDDVAAS. Position 924 is a phosphoserine (S924). Positions 1065 to 1094 are disordered; sequence GTGLASSPDSSSDSSTGSPPRPCPDMQRVE. Low complexity predominate over residues 1070 to 1082; sequence SSPDSSSDSSTGS. In terms of domain architecture, USP spans 1668–2062; the sequence is CGLKNAGATC…NAYMLFYTRC (395 aa). C1677 serves as the catalytic Nucleophile. H1986 (proton acceptor) is an active-site residue. Disordered regions lie at residues 2568–2632 and 2644–2691; these read VSEK…GDSN and AYTS…INGL. Composition is skewed to low complexity over residues 2614–2627 and 2644–2671; these read TPTT…AWPA and AYTS…GSGA. Polar residues predominate over residues 2672–2691; it reads NSETESSAQETTGETTINGL.

Belongs to the peptidase C19 family. In terms of assembly, interacts with imd. Ubiquitinated. Ubiquitination is enhanced by the expression of imd. As to expression, eye disks and ovaries. Expressed in larval fat body.

The enzyme catalyses Thiol-dependent hydrolysis of ester, thioester, amide, peptide and isopeptide bonds formed by the C-terminal Gly of ubiquitin (a 76-residue protein attached to proteins as an intracellular targeting signal).. In terms of biological role, ubiquitin C-terminal hydrolase involved in development and the imd/NF-kappa-B (IMD) signaling cascade. Required for eye and embryo development, and plays a role in compound eye assembly and oogenesis respectively. In the larval eye disks, cells outside the assembling facets require this protein for short-range cell interactions that prevent the mystery cells from becoming photoreceptors. Also required for nuclear migration and cellularization in early embryogenesis and could play a role in pole cell determination, development or function. Regulates the IMD signaling cascade at later stages of infection (around 6 hours post-infection) by inhibiting the expression of the antimicrobial peptides Dpt and Dro. Acts by modulating the state of imd polyubiquitination and/or stability; a function which appears to be independent of its enzymatic activity. In turn, imd enhances the polyubiquitination and stability of faf suggesting that they may form a regulatory feedback mechanism within the Imd pathway. The sequence is that of Probable ubiquitin carboxyl-terminal hydrolase FAF (faf) from Drosophila melanogaster (Fruit fly).